Here is a 758-residue protein sequence, read N- to C-terminus: Ribosomal RNA processing protein 1 homolog B (758 aa).

Position 245 is a phosphoserine (Ser245). Positions 259–272 are enriched in basic residues; the sequence is AVSKKKTALGKNHS. The interval 259 to 285 is disordered; the sequence is AVSKKKTALGKNHSRKDGLSDERGRDD. The segment covering 273–285 has biased composition (basic and acidic residues); sequence RKDGLSDERGRDD. Residues Ser350, Ser392, Ser394, and Ser395 each carry the phosphoserine modification. A disordered region spans residues 381–598; that stretch reads GSRVFCVEEE…KTASLKKRKK (218 aa). Over residues 397–408 the composition is skewed to basic residues; sequence QKRRRKKKKKHH. Positions 447–457 are enriched in low complexity; that stretch reads GAEATSSTGEE. A phosphoserine mark is found at Ser452 and Ser458. The segment covering 469–481 has biased composition (basic residues); the sequence is HNKRKRPRKKSPR. Residues 498–513 are compositionally biased toward low complexity; the sequence is SQSGPSGSHPQGPRGS. Ser513 bears the Phosphoserine mark. Residues 566-575 are compositionally biased toward basic residues; sequence QRRRLQKKKA. Ser579 bears the Phosphoserine mark. Lys652 carries the post-translational modification N6-acetyllysine. The segment at 660–681 is disordered; sequence KSSTATHPPGPAVQLNKTPSSS. Residues Ser702 and Ser706 each carry the phosphoserine modification. Residues 707–758 are disordered; sequence PTGPSRVAFDPEQKPLHGVLKTPTSSPASSPLVAKKPLTTTPRRRPRAMDFF. Arg712 bears the Citrulline mark. Thr728 is subject to Phosphothreonine. Phosphoserine occurs at positions 732, 735, and 736.

Belongs to the RRP1 family. Interacts with the transcriptional activator E2F1. Interacts with serine/threonine-protein phosphatase PP1 subunits PPP1CB and PPP1CC but not with PPP1CA. Interacts with 60S ribosomal proteins RPL5 and RPL27, ribosomal processing protein RRP1/NNP1 and other nucleolar proteins including NOP2/NOL1 and FBL. Also interacts with nucleolar protein NPM1/B23. Interacts with splicing factor SRSF1 and with LUC7L3/CROP. Interacts with GTPase activator SIPA1. Interacts with CBX5/HP1alpha, H1-10, NCL, PARP1, TRIM28 and YBX3. As to quaternary structure, (Microbial infection) Interacts with influenza A virus nucleoprotein NP and with RNA-directed RNA polymerase subunits PB1 and PB2. Citrullinated by PADI4.

The protein resides in the nucleus. Its subcellular location is the nucleolus. The protein localises to the nucleoplasm. It localises to the chromosome. In terms of biological role, positively regulates DNA damage-induced apoptosis by acting as a transcriptional coactivator of proapoptotic target genes of the transcriptional activator E2F1. Likely to play a role in ribosome biogenesis by targeting serine/threonine protein phosphatase PP1 to the nucleolus. Involved in regulation of mRNA splicing. Inhibits SIPA1 GTPase activity. Involved in regulating expression of extracellular matrix genes. Associates with chromatin and may play a role in modulating chromatin structure. (Microbial infection) Following influenza A virus (IAV) infection, promotes viral mRNA transcription by facilitating the binding of IAV RNA-directed RNA polymerase to capped mRNA. This Homo sapiens (Human) protein is Ribosomal RNA processing protein 1 homolog B (RRP1B).